We begin with the raw amino-acid sequence, 400 residues long: Formate-dependent phosphoribosylglycinamide formyltransferase (400 aa).

Residues 22 to 23 and glutamate 82 contribute to the N(1)-(5-phospho-beta-D-ribosyl)glycinamide site; that span reads EL. ATP-binding positions include arginine 114, lysine 155, 160 to 165, 195 to 198, and glutamate 203; these read SSGKGQ and EGFV. The ATP-grasp domain occupies 119–308; that stretch reads RLAAEELGLS…EFALHARALL (190 aa). Mg(2+)-binding residues include glutamate 267 and glutamate 279. Residues aspartate 286, lysine 356, and 363–364 contribute to the N(1)-(5-phospho-beta-D-ribosyl)glycinamide site; that span reads RR.

Belongs to the PurK/PurT family. Homodimer.

It catalyses the reaction N(1)-(5-phospho-beta-D-ribosyl)glycinamide + formate + ATP = N(2)-formyl-N(1)-(5-phospho-beta-D-ribosyl)glycinamide + ADP + phosphate + H(+). It participates in purine metabolism; IMP biosynthesis via de novo pathway; N(2)-formyl-N(1)-(5-phospho-D-ribosyl)glycinamide from N(1)-(5-phospho-D-ribosyl)glycinamide (formate route): step 1/1. Functionally, involved in the de novo purine biosynthesis. Catalyzes the transfer of formate to 5-phospho-ribosyl-glycinamide (GAR), producing 5-phospho-ribosyl-N-formylglycinamide (FGAR). Formate is provided by PurU via hydrolysis of 10-formyl-tetrahydrofolate. The protein is Formate-dependent phosphoribosylglycinamide formyltransferase of Hahella chejuensis (strain KCTC 2396).